The primary structure comprises 957 residues: Vacuolar membrane protease (957 aa).

Over 1–10 (MARYNPFSFT) the chain is Cytoplasmic. The chain crosses the membrane as a helical span at residues 11 to 31 (PGPVVFFTTVIYVGLFAALLV). Residues 32 to 369 (THLTVPDYPS…RVFVVFQLHT (338 aa)) lie on the Vacuolar side of the membrane. Residues asparagine 48, asparagine 105, and asparagine 136 are each glycosylated (N-linked (GlcNAc...) asparagine). Zn(2+)-binding residues include histidine 152 and aspartate 164. The active-site Proton acceptor is the glutamate 198. The Zn(2+) site is built by glutamate 199, glutamate 224, and histidine 297. The chain crosses the membrane as a helical span at residues 370-390 (LFALCVTLLVVAPIALIGLTF). At 391–423 (GLSKADKNYLLARKAFVYSSDDDNPVQLYGWRG) the chain is on the cytoplasmic side. The chain crosses the membrane as a helical span at residues 424–444 (FFRFPIVFVSATAVVVALAYL). The Vacuolar segment spans residues 445–450 (LVRFNA). A helical membrane pass occupies residues 451 to 471 (FIIYSSPFAVWSMMLSAWFFV). Topologically, residues 472-490 (AWFFSRGADAMRPSALQRM) are cytoplasmic. A helical membrane pass occupies residues 491 to 511 (YALIWLFIGSFVLLTIITVFV). The Vacuolar segment spans residues 512–521 (NNYQVVAGYP). A helical transmembrane segment spans residues 522 to 542 (ALFYFAVVFAALMLSYLELFF). Over 543 to 642 (APTKSAYARH…YPGEQEWSGK (100 aa)) the chain is Cytoplasmic. Disordered regions lie at residues 560–591 (RRNS…DATE) and 603–628 (FTRY…RRLD). The span at 564 to 577 (ESASRPLTGSTTAA) shows a compositional bias: polar residues. Residues 643-663 (LPSWIWIIQLLLLAPLVIVLV) traverse the membrane as a helical segment. The Vacuolar portion of the chain corresponds to 664 to 685 (GQVALLLTSALYQTPSDGNSPL). A helical transmembrane segment spans residues 686–706 (FIYLAIAALSVLLLAPTGPFI). The Cytoplasmic portion of the chain corresponds to 707 to 713 (HRFTYHV). A helical transmembrane segment spans residues 714–734 (PTFLFLVCLATVIYNLVAFPF). At 735-957 (SRDHRLKVYF…LVEGFKQFEI (223 aa)) the chain is on the vacuolar side. N-linked (GlcNAc...) asparagine glycosylation is found at asparagine 782, asparagine 818, and asparagine 834.

This sequence belongs to the peptidase M28 family. Requires Zn(2+) as cofactor.

It is found in the vacuole membrane. Its function is as follows. May be involved in vacuolar sorting and osmoregulation. This chain is Vacuolar membrane protease, found in Pyrenophora tritici-repentis (strain Pt-1C-BFP) (Wheat tan spot fungus).